The primary structure comprises 166 residues: Large ribosomal subunit protein uL10 (166 aa).

Belongs to the universal ribosomal protein uL10 family. Part of the ribosomal stalk of the 50S ribosomal subunit. The N-terminus interacts with L11 and the large rRNA to form the base of the stalk. The C-terminus forms an elongated spine to which L12 dimers bind in a sequential fashion forming a multimeric L10(L12)X complex.

Its function is as follows. Forms part of the ribosomal stalk, playing a central role in the interaction of the ribosome with GTP-bound translation factors. This is Large ribosomal subunit protein uL10 from Neisseria gonorrhoeae (strain ATCC 700825 / FA 1090).